A 361-amino-acid polypeptide reads, in one-letter code: dTDP-glucose 4,6-dehydratase (361 aa).

NAD(+) is bound by residues 11 to 12 (FI), 32 to 35 (DKLT), 58 to 59 (DI), 80 to 84 (LAAES), and T99. Residue S84 coordinates substrate. T133 contacts substrate. D134 functions as the Proton donor in the catalytic mechanism. Active-site proton acceptor residues include E135 and Y167. 167–171 (YSASK) is an NAD(+) binding site. Residue N196 participates in substrate binding. N197 provides a ligand contact to NAD(+). Substrate is bound by residues 206 to 207 (KL), 222 to 224 (PIY), R231, N266, and 296 to 300 (DRPGH).

It belongs to the NAD(P)-dependent epimerase/dehydratase family. dTDP-glucose dehydratase subfamily. As to quaternary structure, homodimer. NAD(+) serves as cofactor.

It catalyses the reaction dTDP-alpha-D-glucose = dTDP-4-dehydro-6-deoxy-alpha-D-glucose + H2O. The protein operates within carbohydrate biosynthesis; dTDP-L-rhamnose biosynthesis. Its pathway is bacterial outer membrane biogenesis; LPS O-antigen biosynthesis. Its function is as follows. Catalyzes the dehydration of dTDP-D-glucose to form dTDP-6-deoxy-D-xylo-4-hexulose via a three-step process involving oxidation, dehydration and reduction. This chain is dTDP-glucose 4,6-dehydratase (rfbB), found in Escherichia coli.